A 75-amino-acid polypeptide reads, in one-letter code: MKTLFIALIRGYQKFISPLTPPTCRFYPTCSQYGIEAIKTHGALKGGWLTIKRILKCHPFHPGGVDPVPEKKQKH.

Belongs to the UPF0161 family.

The protein localises to the cell membrane. Functionally, could be involved in insertion of integral membrane proteins into the membrane. The polypeptide is Putative membrane protein insertion efficiency factor (ytjA) (Bacillus subtilis (strain 168)).